The chain runs to 34 residues: Delta-theraphotoxin-Hm1b (34 aa).

Cystine bridges form between Cys-2-Cys-16, Cys-9-Cys-21, and Cys-15-Cys-28. A Phenylalanine amide modification is found at Phe-34.

It belongs to the neurotoxin 10 (Hwtx-1) family. 09 (HaTx) subfamily. In terms of tissue distribution, expressed by the venom gland.

The protein resides in the secreted. Gating-modifier toxin that potently and selectively acts on Nav1.1/SCN1A and Nav1.3/SCN3A. It enhances hNav1.1/SCN1A currents and delays fast inactivation of the channel (EC(50)=11.6 nM), leading to a sustained current. Similar effects are observed at Nav1.3/SCN3A (EC(50)=11.8 nM), but with less sustained currents. When tested on Nav1.2/SCN2A, the native toxin decreases the peak current by 50% at saturating concentration, whereas the recombinant toxin only shows a weak decrease of peak current. The native toxin specifically activates the voltage-gated sodium channel Nav1.1/SCN1A in somatosensory neurons to elicit acute pain and mechanical allodynia. When tested on Nav1.1/SCN1A, the toxin induces a hyperpolarising shift of the voltage-dependence of steady-state activation, and induces a depolarizing shift in the voltage dependence of inactivation. In addition, it does not modify the recovery from fast inactivation in Nav1.1/SCN1A. The toxin hydrophobic face probably interacts with the domain IV voltage-sensor of Nav1.1/SCN1A and Nav1.3/SCN3A and may trap the voltage-sensing S4 helix in a partially activated state. In vivo, intracerebroventricular injection into mice elicits convulsions, spasms, tremors and rapid death. When injected into mouse hindpaw, the toxin elicits an immediate and robust response to pain. However, intraplantar injection of toxin does not cause neurogenic inflammation or alter sensitivity to heat, indicative of a modality-specific effect on mechanosensitive neurons. The polypeptide is Delta-theraphotoxin-Hm1b (Heteroscodra maculata (Togo starburst tarantula)).